The primary structure comprises 197 residues: Holliday junction branch migration complex subunit RuvA (197 aa).

Positions 1 to 63 (MIALLNGQLI…EDALLLFGFL (63 aa)) are domain I. A domain II region spans residues 64–142 (TETEKDLFGL…PVQAVPGNAP (79 aa)). The interval 142 to 146 (PLPAE) is flexible linker. Positions 147–197 (TAGDLREDALSALVNLGYKENLSRKALDGIDTAPDAPLEDILKQALKLLMR) are domain III.

The protein belongs to the RuvA family. In terms of assembly, homotetramer. Forms an RuvA(8)-RuvB(12)-Holliday junction (HJ) complex. HJ DNA is sandwiched between 2 RuvA tetramers; dsDNA enters through RuvA and exits via RuvB. An RuvB hexamer assembles on each DNA strand where it exits the tetramer. Each RuvB hexamer is contacted by two RuvA subunits (via domain III) on 2 adjacent RuvB subunits; this complex drives branch migration. In the full resolvosome a probable DNA-RuvA(4)-RuvB(12)-RuvC(2) complex forms which resolves the HJ.

It localises to the cytoplasm. In terms of biological role, the RuvA-RuvB-RuvC complex processes Holliday junction (HJ) DNA during genetic recombination and DNA repair, while the RuvA-RuvB complex plays an important role in the rescue of blocked DNA replication forks via replication fork reversal (RFR). RuvA specifically binds to HJ cruciform DNA, conferring on it an open structure. The RuvB hexamer acts as an ATP-dependent pump, pulling dsDNA into and through the RuvAB complex. HJ branch migration allows RuvC to scan DNA until it finds its consensus sequence, where it cleaves and resolves the cruciform DNA. The sequence is that of Holliday junction branch migration complex subunit RuvA from Syntrophotalea carbinolica (strain DSM 2380 / NBRC 103641 / GraBd1) (Pelobacter carbinolicus).